We begin with the raw amino-acid sequence, 346 residues long: UDP-N-acetylenolpyruvoylglucosamine reductase (346 aa).

The 172-residue stretch at 23-194 (FDVRAQFACR…TSVTFRLPKV (172 aa)) folds into the FAD-binding PCMH-type domain. The active site involves R170. The active-site Proton donor is S246. Residue E342 is part of the active site.

This sequence belongs to the MurB family. FAD is required as a cofactor.

The protein localises to the cytoplasm. It carries out the reaction UDP-N-acetyl-alpha-D-muramate + NADP(+) = UDP-N-acetyl-3-O-(1-carboxyvinyl)-alpha-D-glucosamine + NADPH + H(+). It participates in cell wall biogenesis; peptidoglycan biosynthesis. Functionally, cell wall formation. The chain is UDP-N-acetylenolpyruvoylglucosamine reductase from Paraburkholderia phytofirmans (strain DSM 17436 / LMG 22146 / PsJN) (Burkholderia phytofirmans).